The sequence spans 198 residues: tRNA (pseudouridine(54)-N(1))-methyltransferase (198 aa).

S-adenosyl-L-methionine is bound by residues leucine 130, glycine 153, 176 to 181 (LSPLEL), and cysteine 186.

The protein belongs to the methyltransferase superfamily. TrmY family. As to quaternary structure, homodimer.

It localises to the cytoplasm. The catalysed reaction is pseudouridine(54) in tRNA + S-adenosyl-L-methionine = N(1)-methylpseudouridine(54) in tRNA + S-adenosyl-L-homocysteine + H(+). Its function is as follows. Specifically catalyzes the N1-methylation of pseudouridine at position 54 (Psi54) in tRNAs. The polypeptide is tRNA (pseudouridine(54)-N(1))-methyltransferase (Methanococcus vannielii (strain ATCC 35089 / DSM 1224 / JCM 13029 / OCM 148 / SB)).